The chain runs to 182 residues: Probable nicotinate-nucleotide adenylyltransferase (182 aa).

It belongs to the NadD family.

It catalyses the reaction nicotinate beta-D-ribonucleotide + ATP + H(+) = deamido-NAD(+) + diphosphate. It functions in the pathway cofactor biosynthesis; NAD(+) biosynthesis; deamido-NAD(+) from nicotinate D-ribonucleotide: step 1/1. In terms of biological role, catalyzes the reversible adenylation of nicotinate mononucleotide (NaMN) to nicotinic acid adenine dinucleotide (NaAD). The protein is Probable nicotinate-nucleotide adenylyltransferase of Sulfurimonas denitrificans (strain ATCC 33889 / DSM 1251) (Thiomicrospira denitrificans (strain ATCC 33889 / DSM 1251)).